The chain runs to 61 residues: Metallothionein (61 aa).

Methionine 1 is subject to N-acetylmethionine. A beta region spans residues 1-29; that stretch reads MDPNCSCAAGGSCTCAGSCKCKECKCTSC. Positions 5, 7, 13, 15, 19, 21, 24, 26, 29, 33, 34, 36, 37, 41, 44, 48, 50, 57, 59, and 60 each coordinate a divalent metal cation. An alpha region spans residues 30–61; the sequence is KKSCCSCCPPGCTKCAQGCVCKGASDKCNCCA.

This sequence belongs to the metallothionein superfamily. Type 1 family. As to quaternary structure, monomer.

In terms of biological role, metallothioneins have a high content of cysteine residues that bind various heavy metals. This is Metallothionein from Balaena mysticetus (Bowhead whale).